The primary structure comprises 704 residues: MSNNLYITATESKSGKSAVVLGMMQLLLRDVRKVAFFRPIINQASTDVRDHDINLILRHFGLDIAYEDTYAYSLQDARELINNGQHATLLDNILKKYKKLEDAYDFVLCEGTDFLGKDAAFEFELNADIAANLGCPVMVVANGQQKAARELIASTQLTIDLLDEKGLDVVTAVINRATVTEAEREEIIKSLECKVNCSNPLAVYVLPEESTLGKPTMNDVKKWLGAQVLYGHGRLDTLVDDYIIAAMQIGNFLDYVSQGCLVITPGDRSDIILSSLASRLSTAYPDISGLLLTGGLEPAANVHRLIEGWTGVPIPILSVKDHTYKTIQTLNELYGKIEPDNDRKINTALALFERHIDSSELGSRLINRKSSRITPKMFEFNLIEKAKRNRMRIVLPEGAEERILRAADILVRREVADIILLGDANTVGSRIGDLGLDMDGVQIVQPNLSPKFDEYVAAYHECRKKKGISMEQARDMMNDPTYFGTMMVHKGDADGMVSGAINTTAHTIRPAFEFIKTKPGVSIVSSVFLMCLKDRVLVFGDCAVNPNPTAEQLAEIAISASHTARIFGVDPRVAMLSYSTGSSGKGADVEKVIEATRIAKERAPELLLEGPLQYDAAIDMDVARTKLPGSTVAGQATVFIFPDLNTGNNTYKAVQRAAGAVAIGPVLQGLNKPVNDLSRGCTVADIVNTVAITAIQAQAEKGLI.

A phosphate acetyltransferase region spans residues 380–704 (FNLIEKAKRN…IQAQAEKGLI (325 aa)).

In the N-terminal section; belongs to the CobB/CobQ family. It in the C-terminal section; belongs to the phosphate acetyltransferase and butyryltransferase family. In terms of assembly, homohexamer.

The protein resides in the cytoplasm. It catalyses the reaction acetyl-CoA + phosphate = acetyl phosphate + CoA. Its pathway is metabolic intermediate biosynthesis; acetyl-CoA biosynthesis; acetyl-CoA from acetate: step 2/2. Functionally, involved in acetate metabolism. In Nitratidesulfovibrio vulgaris (strain ATCC 29579 / DSM 644 / CCUG 34227 / NCIMB 8303 / VKM B-1760 / Hildenborough) (Desulfovibrio vulgaris), this protein is Phosphate acetyltransferase (pta).